Here is a 160-residue protein sequence, read N- to C-terminus: Secreted RxLR effector protein RXLR-C11 (160 aa).

Residues 1-19 form the signal peptide; that stretch reads MHFSLVLLVFAAIVIPICA. A RxLR-dEER motif is present at residues 58-75; that stretch reads RLLRMNDKAVISDHEEER.

This sequence belongs to the RxLR effector family.

The protein localises to the secreted. Its subcellular location is the host cell membrane. The protein resides in the host nucleus. Functionally, secreted effector that suppresses pattern-triggered immunity (PTI) in plant host. This chain is Secreted RxLR effector protein RXLR-C11, found in Plasmopara halstedii (Downy mildew of sunflower).